The primary structure comprises 418 residues: MFLKNILSVLAFALLIDAAPVKRSPGFVTLDFNVKRSLVDPDDPTVEAKRSPLFLEFTPSEFPVDETGRDGDVDKRGPVAVTLHNEAITYTADITVGSDNQKLNVIVDTGSSDLWIPDSNVICIPKWRGDKGDFCKSAGSYSPASSRTSQNLNTRFDIKYGDGSYAKGKLYKDTVGIGGVSVRDQLFANVWSTSARKGILGIGFQSGEATEFDYDNLPISLRNQGIIGKAAYSLYLNSAEASTGQIIFGGIDKAKYSGSLVDLPITSEKKLTVGLRSVNVRGRNVDANTNVLLDSGTTISYFTRSIVRNILYAIGAQMKFDSAGNKVYVADCKTSGTIDFQFGNNLKISVPVSEFLFQTYYTSGKPFPKCEVRIRESEDNILGDNFLRSAYVVYNLDDKKISMAPVKYTSESDIVAIN.

Positions methionine 1–alanine 18 are cleaved as a signal peptide. The propeptide at alanine 19–arginine 76 is activation peptide. Residues tyrosine 90–alanine 404 form the Peptidase A1 domain. Residue aspartate 108 is part of the active site. Residue aspartate 108 to glycine 110 participates in pepstatin A binding. Cysteine 123 and cysteine 135 are oxidised to a cystine. Glycine 161–aspartate 162 serves as a coordination point for pepstatin A. Zn(2+) is bound at residue glutamate 268. Aspartate 294 is a catalytic residue. Aspartate 294–threonine 298 contributes to the pepstatin A binding site. A disulfide bridge links cysteine 332 with cysteine 370.

The protein belongs to the peptidase A1 family.

It localises to the secreted. It catalyses the reaction Preferential cleavage at the carboxyl of hydrophobic amino acids, but fails to cleave 15-Leu-|-Tyr-16, 16-Tyr-|-Leu-17 and 24-Phe-|-Phe-25 of insulin B chain. Activates trypsinogen, and degrades keratin.. Its activity is regulated as follows. Inhibited by pepstatin A analogs. Functionally, secreted aspartic peptidases (SAPs) are a group of ten acidic hydrolases considered as key virulence factors. These enzymes supply the fungus with nutrient amino acids as well as are able to degrade the selected host's proteins involved in the immune defense. Moreover, acts toward human hemoglobin though limited proteolysis to generate a variety of antimicrobial hemocidins, enabling to compete with the other microorganisms of the same physiological niche using the microbicidal peptides generated from the host protein. This Candida albicans (strain SC5314 / ATCC MYA-2876) (Yeast) protein is Secreted aspartic protease 5.